Consider the following 74-residue polypeptide: Apolipoprotein C-I, acidic form (74 aa).

The signal sequence occupies residues 1 to 26 (MRLFLSLPVLVVVLSMVLEGPTPAQG).

Belongs to the apolipoprotein C1 family.

The protein localises to the secreted. The chain is Apolipoprotein C-I, acidic form (APOC1A) from Colobus guereza (Mantled guereza).